We begin with the raw amino-acid sequence, 361 residues long: MLYNLLLPHIHNSHIANLFHYITFRSGLAIIITLSLSFITGPILIKFLRSLQKNGQPIRSDGPESHQTKVGTPTMGGIMIILSSCLSTLLLADLTNKYTWITLFGFISFGIIGFMDDYAKVTKNNHYGVRGKSKLLLQGIISFIICVLLEYLDKSPSHLLNVPFFKNLSLDLGYFYIVFAIFVIVGSSNAVNLTDGLDGLATVPIAFTAGSFALISYLVGNLIYSNYLQLTYIPNTGELTVLCAGLVGSCLGFLWFNAQPAEVFMGDTGSLSLGGVLGIISVITKHEIVLAIVGGLFVIETASVILQVYYFKATKGKRIFKMAPLHHHFEKHGWAESKVVIRFWIISVIFALIGLSSLKLR.

10 helical membrane passes run 28 to 48 (LAIIITLSLSFITGPILIKFL), 74 to 94 (TMGGIMIILSSCLSTLLLADL), 99 to 119 (TWITLFGFISFGIIGFMDDYA), 133 to 153 (SKLLLQGIISFIICVLLEYLD), 168 to 188 (LSLDLGYFYIVFAIFVIVGSS), 203 to 223 (VPIAFTAGSFALISYLVGNLI), 236 to 256 (TGELTVLCAGLVGSCLGFLWF), 263 to 283 (VFMGDTGSLSLGGVLGIISVI), 288 to 308 (IVLAIVGGLFVIETASVILQV), and 338 to 358 (KVVIRFWIISVIFALIGLSSL).

It belongs to the glycosyltransferase 4 family. MraY subfamily. The cofactor is Mg(2+).

It is found in the cell inner membrane. The enzyme catalyses UDP-N-acetyl-alpha-D-muramoyl-L-alanyl-gamma-D-glutamyl-meso-2,6-diaminopimeloyl-D-alanyl-D-alanine + di-trans,octa-cis-undecaprenyl phosphate = di-trans,octa-cis-undecaprenyl diphospho-N-acetyl-alpha-D-muramoyl-L-alanyl-D-glutamyl-meso-2,6-diaminopimeloyl-D-alanyl-D-alanine + UMP. Its pathway is cell wall biogenesis; peptidoglycan biosynthesis. Catalyzes the initial step of the lipid cycle reactions in the biosynthesis of the cell wall peptidoglycan: transfers peptidoglycan precursor phospho-MurNAc-pentapeptide from UDP-MurNAc-pentapeptide onto the lipid carrier undecaprenyl phosphate, yielding undecaprenyl-pyrophosphoryl-MurNAc-pentapeptide, known as lipid I. In Rickettsia massiliae (strain Mtu5), this protein is Phospho-N-acetylmuramoyl-pentapeptide-transferase.